A 195-amino-acid chain; its full sequence is Holliday junction branch migration complex subunit RuvA (195 aa).

The segment at methionine 1–serine 64 is domain I. Residues aspartate 65–alanine 139 form a domain II region. Positions alanine 139–threonine 143 are flexible linker. The tract at residues serine 144–alanine 195 is domain III.

It belongs to the RuvA family. In terms of assembly, homotetramer. Forms an RuvA(8)-RuvB(12)-Holliday junction (HJ) complex. HJ DNA is sandwiched between 2 RuvA tetramers; dsDNA enters through RuvA and exits via RuvB. An RuvB hexamer assembles on each DNA strand where it exits the tetramer. Each RuvB hexamer is contacted by two RuvA subunits (via domain III) on 2 adjacent RuvB subunits; this complex drives branch migration. In the full resolvosome a probable DNA-RuvA(4)-RuvB(12)-RuvC(2) complex forms which resolves the HJ.

Its subcellular location is the cytoplasm. Functionally, the RuvA-RuvB-RuvC complex processes Holliday junction (HJ) DNA during genetic recombination and DNA repair, while the RuvA-RuvB complex plays an important role in the rescue of blocked DNA replication forks via replication fork reversal (RFR). RuvA specifically binds to HJ cruciform DNA, conferring on it an open structure. The RuvB hexamer acts as an ATP-dependent pump, pulling dsDNA into and through the RuvAB complex. HJ branch migration allows RuvC to scan DNA until it finds its consensus sequence, where it cleaves and resolves the cruciform DNA. This is Holliday junction branch migration complex subunit RuvA from Chloroflexus aggregans (strain MD-66 / DSM 9485).